A 332-amino-acid polypeptide reads, in one-letter code: Multiple virulence factor regulator MvfR (332 aa).

The 58-residue stretch at 4–61 folds into the HTH lysR-type domain; the sequence is HNLNHVNMFLQVIASGSISSAARILRKSHTAVSSAVSNLEIDLCVELVRRDGYKVEPT. The H-T-H motif DNA-binding region spans 21–40; the sequence is ISSAARILRKSHTAVSSAVS.

It belongs to the LysR transcriptional regulatory family. Forms homooligomers.

The protein resides in the cell inner membrane. It is found in the secreted. With respect to regulation, both 3,4-dihydroxy-2-heptylquinoline (PQS) and its precursor 4-hydroxy-2-heptylquinoline (HHQ) function as ligands and promote MvfR DNA-binding activity leading to transcriptional activation. Transcription regulator that plays a critical role in virulence by positively regulating the expression of multiple quorum sensing (QS)-regulated virulence factors, genes involved in protein secretion, translation, response to oxidative stress and the phnAB operon. At the stationary phase, negatively autoregulates its function through cleavage and translocation to the extracellular space. The sequence is that of Multiple virulence factor regulator MvfR from Pseudomonas aeruginosa (strain ATCC 15692 / DSM 22644 / CIP 104116 / JCM 14847 / LMG 12228 / 1C / PRS 101 / PAO1).